Consider the following 264-residue polypeptide: Fructose-1,6-bisphosphatase/inositol-1-monophosphatase (264 aa).

Positions 70, 86, 88, and 89 each coordinate Mg(2+). Residues 89–91 (DGT), Arg185, and Ala190 contribute to the substrate site. Asp214 provides a ligand contact to Mg(2+).

It belongs to the inositol monophosphatase superfamily. FBPase class 4 family. Mg(2+) is required as a cofactor.

The enzyme catalyses beta-D-fructose 1,6-bisphosphate + H2O = beta-D-fructose 6-phosphate + phosphate. It catalyses the reaction a myo-inositol phosphate + H2O = myo-inositol + phosphate. Phosphatase with broad specificity; it can dephosphorylate fructose 1,6-bisphosphate, and both D and L isomers of inositol-1-phosphate (I-1-P). The chain is Fructose-1,6-bisphosphatase/inositol-1-monophosphatase (suhB) from Aquifex aeolicus (strain VF5).